A 284-amino-acid chain; its full sequence is Peflin (284 aa).

Positions 1 to 111 (MASYPYRQGC…QPGLYGQGGA (111 aa)) are disordered. Residues 8–26 (QGCPGAAGQAPGAPPGSYY) are compositionally biased toward low complexity. 9 tandem repeats follow at residues 21–29 (PPGSYYPGP), 31–39 (NSGGQYGSG), 41–49 (PPGGGYGGP), 50–58 (APGGPYGPP), 59–67 (AGGGPYGHP), 76–84 (TPGGPYGGA), 85–92 (APGGPYGQ), 93–100 (PPPSSYGA), and 101–109 (QQPGLYGQG). The interval 21-109 (PPGSYYPGPP…AQQPGLYGQG (89 aa)) is 9 X 9 AA approximate tandem repeat of [AP]-P-G-G-P-Y-G-G-P-P. Over residues 34 to 50 (GQYGSGLPPGGGYGGPA) the composition is skewed to gly residues. Low complexity predominate over residues 65–75 (GHPNPGMFPSG). Over residues 76 to 90 (TPGGPYGGAAPGGPY) the composition is skewed to gly residues. 5 EF-hand domains span residues 114 to 149 (NVDPEAYSWFQSVDSDHSGYISMKELKQALVNCNWS), 155 to 183 (TCLMMINMFDKTKSGRIDVYGFSALWKFI), 181 to 216 (KFIQQWKNLFQQYDRDRSGSISYTELQQALSQMGYN), 217 to 253 (LSPQFTQLLVSRYCPRSANPAMQLDRFIQVCTQLQVL), and 254 to 283 (TEAFREKDTAVQGNIRLSFEDFVTMTASRM). The Ca(2+) site is built by D127, D129, S131, and Y133. K137 participates in a covalent cross-link: Glycyl lysine isopeptide (Lys-Gly) (interchain with G-Cter in ubiquitin). E138 is a binding site for Ca(2+). The Ca(2+) site is built by D194, D196, S198, S200, and E205. Positions 204–284 (TELQQALSQM…FVTMTASRML (81 aa)) are required for interaction with PDCD6.

In terms of assembly, heterodimer; heterodimerizes (via the EF-hand 5) with PDCD6. Dissociates from PDCD6 in presence of calcium. In terms of processing, ubiquitinated by the BCR(KLHL12) E3 ubiquitin ligase complex.

Its subcellular location is the cytoplasm. The protein resides in the endoplasmic reticulum. The protein localises to the membrane. It is found in the cytoplasmic vesicle. It localises to the COPII-coated vesicle membrane. Calcium-binding protein that acts as an adapter that bridges unrelated proteins or stabilizes weak protein-protein complexes in response to calcium. Together with PDCD6, acts as a calcium-dependent adapter for the BCR(KLHL12) complex, a complex involved in endoplasmic reticulum (ER)-Golgi transport by regulating the size of COPII coats. In response to cytosolic calcium increase, the heterodimer formed with PDCD6 interacts with, and bridges together the BCR(KLHL12) complex and SEC31 (SEC31A or SEC31B), promoting monoubiquitination of SEC31 and subsequent collagen export, which is required for neural crest specification. Its role in the heterodimer formed with PDCD6 is however unclear: some evidence shows that PEF1 and PDCD6 work together and promote association between PDCD6 and SEC31 in presence of calcium. Other reports show that PEF1 dissociates from PDCD6 in presence of calcium, and may act as a negative regulator of PDCD6. Also acts as a negative regulator of ER-Golgi transport; possibly by inhibiting interaction between PDCD6 and SEC31. This Homo sapiens (Human) protein is Peflin.